Here is a 95-residue protein sequence, read N- to C-terminus: UPF0298 protein LVIS_1401 (95 aa).

The protein belongs to the UPF0298 family.

It localises to the cytoplasm. The sequence is that of UPF0298 protein LVIS_1401 from Levilactobacillus brevis (strain ATCC 367 / BCRC 12310 / CIP 105137 / JCM 1170 / LMG 11437 / NCIMB 947 / NCTC 947) (Lactobacillus brevis).